The primary structure comprises 725 residues: Ribosomal RNA large subunit methyltransferase K/L (725 aa).

Residues 46-157 (VAYRLCLWSR…RGQATLSLDL (112 aa)) form the THUMP domain. Residues 393–412 (TGERGERNDDGQARAPSEPA) are disordered. Over residues 395–404 (ERGERNDDGQ) the composition is skewed to basic and acidic residues.

The protein belongs to the methyltransferase superfamily. RlmKL family.

It is found in the cytoplasm. It catalyses the reaction guanosine(2445) in 23S rRNA + S-adenosyl-L-methionine = N(2)-methylguanosine(2445) in 23S rRNA + S-adenosyl-L-homocysteine + H(+). The catalysed reaction is guanosine(2069) in 23S rRNA + S-adenosyl-L-methionine = N(2)-methylguanosine(2069) in 23S rRNA + S-adenosyl-L-homocysteine + H(+). Specifically methylates the guanine in position 2445 (m2G2445) and the guanine in position 2069 (m7G2069) of 23S rRNA. This is Ribosomal RNA large subunit methyltransferase K/L from Pseudomonas paraeruginosa (strain DSM 24068 / PA7) (Pseudomonas aeruginosa (strain PA7)).